A 90-amino-acid chain; its full sequence is Small ribosomal subunit protein uS19 (90 aa).

It belongs to the universal ribosomal protein uS19 family.

Protein S19 forms a complex with S13 that binds strongly to the 16S ribosomal RNA. The chain is Small ribosomal subunit protein uS19 from Hydrogenovibrio crunogenus (strain DSM 25203 / XCL-2) (Thiomicrospira crunogena).